A 203-amino-acid polypeptide reads, in one-letter code: ATP-dependent Clp protease proteolytic subunit 2 (203 aa).

Residue S98 is the Nucleophile of the active site. Residue H123 is part of the active site.

This sequence belongs to the peptidase S14 family. Fourteen ClpP subunits assemble into 2 heptameric rings which stack back to back to give a disk-like structure with a central cavity, resembling the structure of eukaryotic proteasomes.

The protein localises to the cytoplasm. The catalysed reaction is Hydrolysis of proteins to small peptides in the presence of ATP and magnesium. alpha-casein is the usual test substrate. In the absence of ATP, only oligopeptides shorter than five residues are hydrolyzed (such as succinyl-Leu-Tyr-|-NHMec, and Leu-Tyr-Leu-|-Tyr-Trp, in which cleavage of the -Tyr-|-Leu- and -Tyr-|-Trp bonds also occurs).. Cleaves peptides in various proteins in a process that requires ATP hydrolysis. Has a chymotrypsin-like activity. Plays a major role in the degradation of misfolded proteins. This is ATP-dependent Clp protease proteolytic subunit 2 from Chlamydia muridarum (strain MoPn / Nigg).